The following is a 77-amino-acid chain: Small ribosomal subunit protein bS18 (77 aa).

The protein belongs to the bacterial ribosomal protein bS18 family. Part of the 30S ribosomal subunit. Forms a tight heterodimer with protein bS6.

Its function is as follows. Binds as a heterodimer with protein bS6 to the central domain of the 16S rRNA, where it helps stabilize the platform of the 30S subunit. In Halalkalibacterium halodurans (strain ATCC BAA-125 / DSM 18197 / FERM 7344 / JCM 9153 / C-125) (Bacillus halodurans), this protein is Small ribosomal subunit protein bS18.